Reading from the N-terminus, the 822-residue chain is Serine/threonine-protein kinase kin-29 (822 aa).

One can recognise a Protein kinase domain in the interval 16 to 267; that stretch reads YDVGRAIGKG…IQNVLQHRWM (252 aa). Residues 22 to 30 and Lys45 contribute to the ATP site; that span reads IGKGNFATV. Asp138 serves as the catalytic Proton acceptor. Disordered regions lie at residues 348-367, 389-423, and 577-602; these read EGTG…LSGK, LSSP…RQFG, and NPIP…WASP. A compositionally biased stretch (acidic residues) spans 394–406; it reads CDSDDSSNSDLCD.

The protein belongs to the protein kinase superfamily. CAMK Ser/Thr protein kinase family. SNF1 subfamily. Interacts with tax-6. Requires Mg(2+) as cofactor. Post-translationally, autophosphorylated. Elevated cAMP levels appears to act via PKA to directly or indirectly phosphorylate multiple sites on kin-29 and inhibit function. In terms of tissue distribution, primarily neuronal, with additional expression in body wall muscle and hypodermal cells. Among neuronal cells, expressed in multiple sensory neurons and interneurons in the lateral, anterior, and lumbar ganglia, as well as in motor neurons in the ventral motor cord. Present in the AWB and AWC olfactory neurons.

The protein localises to the cytoplasm. The protein resides in the nucleus. The catalysed reaction is L-seryl-[protein] + ATP = O-phospho-L-seryl-[protein] + ADP + H(+). It carries out the reaction L-threonyl-[protein] + ATP = O-phospho-L-threonyl-[protein] + ADP + H(+). Regulates chemoreceptor expression by phosphorylating the hda-4 class II histone deacetylase (HDAC) and inhibiting the gene repression functions of hda-4 and the mef-2 transcription factor, enabling the correct sensing and transduction of food signals. Role in determining body size, the dauer decision and serotonin-mediated egg laying. May modulate the Sma/Mab pathway and regulates development in the later larval stages. The chain is Serine/threonine-protein kinase kin-29 from Caenorhabditis elegans.